A 304-amino-acid polypeptide reads, in one-letter code: Peptidyl-prolyl cis-trans isomerase FKBP35 (304 aa).

The region spanning 37 to 126 (GNEVTVHYVG…LFEIELLSFR (90 aa)) is the PPIase FKBP-type domain. TPR repeat units follow at residues 144–177 (AFDI…FIHT), 194–227 (ISCN…DKNN), and 228–261 (VKAL…NPNN).

It belongs to the FKBP-type PPIase family. In terms of assembly, homodimer. Interacts (via TPR repeats) with HSP90 (probably via MEEVD motif).

It is found in the cytoplasm. The protein localises to the nucleus. It catalyses the reaction [protein]-peptidylproline (omega=180) = [protein]-peptidylproline (omega=0). Inhibited by FK506 and its derivates, such as ascomycin, and rapamycin. FK506 and rapamycin inhibit peptidylprolyl isomerase activity but not chaperone activity. Inhibited by N-(2-ethyl-phenyl)-2-(3H-imidazao [4, 5-b] pyridin-2-yl-sulfanyl)-acetamide (D44). Not inhibited by cyclosporin A. Inhibition of calcineurin phosphatase activity is enhanced by FK506. Functionally, has peptidylprolyl isomerase (PPIase) and co-chaperone activities. Assists protein folding by catalyzing the peptidyl conversion of cis and trans rotamers of the prolyl amide bond of protein substrates. Inhibits calcineurin phosphatase activity in vitro. Plays an essential role in merozoite egress from host erythrocytes. The chain is Peptidyl-prolyl cis-trans isomerase FKBP35 from Plasmodium falciparum (isolate 3D7).